The chain runs to 290 residues: Shikimate dehydrogenase (NADP(+)) (290 aa).

Shikimate contacts are provided by residues 24-26 and Thr71; that span reads SLS. The Proton acceptor role is filled by Lys75. Shikimate contacts are provided by Asn96 and Asp111. Residues 136–140, 160–165, and Leu233 each bind NADP(+); these read GAGGA and NRTVDR. Residue Tyr235 coordinates shikimate. Gly256 contacts NADP(+).

It belongs to the shikimate dehydrogenase family. Homodimer.

The enzyme catalyses shikimate + NADP(+) = 3-dehydroshikimate + NADPH + H(+). It functions in the pathway metabolic intermediate biosynthesis; chorismate biosynthesis; chorismate from D-erythrose 4-phosphate and phosphoenolpyruvate: step 4/7. Functionally, involved in the biosynthesis of the chorismate, which leads to the biosynthesis of aromatic amino acids. Catalyzes the reversible NADPH linked reduction of 3-dehydroshikimate (DHSA) to yield shikimate (SA). The polypeptide is Shikimate dehydrogenase (NADP(+)) (Methanopyrus kandleri (strain AV19 / DSM 6324 / JCM 9639 / NBRC 100938)).